A 309-amino-acid chain; its full sequence is Jacalin-related lectin 25 (309 aa).

A Jacalin-type lectin domain is found at 8 to 190 (MFKVGPIGSQ…LTSIGIYVCP (183 aa)).

The protein belongs to the jacalin lectin family.

This is Jacalin-related lectin 25 (JAL25) from Arabidopsis thaliana (Mouse-ear cress).